The chain runs to 103 residues: Co-chaperonin GroES (103 aa).

It belongs to the GroES chaperonin family. In terms of assembly, heptamer of 7 subunits arranged in a ring. Interacts with the chaperonin GroEL.

Its subcellular location is the cytoplasm. Functionally, together with the chaperonin GroEL, plays an essential role in assisting protein folding. The GroEL-GroES system forms a nano-cage that allows encapsulation of the non-native substrate proteins and provides a physical environment optimized to promote and accelerate protein folding. GroES binds to the apical surface of the GroEL ring, thereby capping the opening of the GroEL channel. This Nostoc sp. (strain PCC 7120 / SAG 25.82 / UTEX 2576) protein is Co-chaperonin GroES.